The following is a 1344-amino-acid chain: DEAD-box ATP-dependent RNA helicase FANCM (1344 aa).

The interval 39 to 61 (SSSHFTPLANPPITANLTKPPAK) is disordered. One can recognise a Helicase ATP-binding domain in the interval 124–292 (ITKTALFSNT…GIIDNLQIST (169 aa)). 137–144 (LPTGLGKT) serves as a coordination point for ATP. Residues 240-243 (DEAH) carry the DEAH box motif. One can recognise a Helicase C-terminal domain in the interval 450–621 (KLSKMLEILV…SFNFHPSPRM (172 aa)). Disordered stretches follow at residues 765-790 (VNTS…KDYE), 1110-1148 (EVSS…TQAE), 1183-1218 (YSAG…SNQD), and 1307-1344 (KQRS…LGLW). Residues 1118 to 1135 (SADENEDVTGDSFEDSFI) are compositionally biased toward acidic residues. Residues 1207-1218 (TPKTTNSESNQD) are compositionally biased toward polar residues. Positions 1308–1318 (QRSEAKEKEDA) are enriched in basic and acidic residues.

This sequence belongs to the DEAD box helicase family. DEAH subfamily. FANCM sub-subfamily.

It is found in the nucleus. The catalysed reaction is ATP + H2O = ADP + phosphate + H(+). Involved in ordered homologous recombination (HR) events in somatic and meiotic cells. Involved in the suppression of spontaneous HR events in somatic cells. Has an opposite function to the DNA binding cofactor MHF1 which promotes spontaneous HR. Functions in replicative repair independently of MHF1 and in a parallel pathway to the endonuclease MUS81. Acts in the same pathway as the two DNA-binding cofactors MHF1 and MHF2 to restrain class II meiotic crossover (CO), and acts exclusively with MHF1 and MHF2 during meiosis to repair DNA interstrand cross-links (ICLs). This common pathway is in parallel to the pathway that involves the RECQ4A helicase. Seems to be involved in the stabilization of recombination intermediates. Involved in DNA double-strand break (DSB) repair during meiosis. Required for synthesis-dependent strand annealing (SDSA) and to a lesser extent for single-strand annealing (SSA). May process meiotic DSB repair intermediates, possibly D-loops, driving them toward noncrossover (NCO) resolution. The chain is DEAD-box ATP-dependent RNA helicase FANCM from Arabidopsis thaliana (Mouse-ear cress).